Here is a 989-residue protein sequence, read N- to C-terminus: Frequency clock protein (989 aa).

3 disordered regions span residues 1 to 139, 208 to 290, and 331 to 445; these read MADS…PGFR, FAAS…VGTQ, and ISGR…PDRV. Residues 36 to 45 are compositionally biased toward basic and acidic residues; sequence ENHRLARDTS. Over residues 46–88 the composition is skewed to polar residues; sequence SRVTSSSALGVTESQPQLKSSPTRRNSSGESEPTNWFNQSNRN. The segment covering 109–119 has biased composition (basic and acidic residues); that stretch reads KETDSSNEESR. Residues 233 to 255 show a composition bias toward low complexity; that stretch reads HSSGVSLSKHDSSSSSRSRPVDS. 2 stretches are compositionally biased toward polar residues: residues 256–274 and 334–343; these read AYNSMSTGRSSHAPHSSGP and RNMQRNQSMP. Residues 377-386 show a composition bias toward basic and acidic residues; it reads DNPRKNRSSK. Polar residues predominate over residues 387 to 397; the sequence is DNGSASNSGGD. Residues 402–418 show a composition bias toward gly residues; that stretch reads GGTGTGSGDGSGSGGRT. A compositionally biased stretch (basic and acidic residues) spans 433–444; it reads RPTRPRDLDPDR. T501 is subject to Phosphothreonine. Residues S513 and S519 each carry the phosphoserine modification. Disordered stretches follow at residues 524–642, 865–907, and 968–989; these read KIRW…QRRK, WDDG…TYMR, and SVATAGGAESGYSSSMEDVSSS. The Nuclear localization signal motif lies at 564-568; sequence RKKRK. The span at 598–615 shows a compositional bias: polar residues; sequence RNSSSIETSLEESMSQGS. The span at 865 to 886 shows a compositional bias: acidic residues; the sequence is WDDGDDLASDDEEVEEVEEDSY. Residues 978-989 show a composition bias toward polar residues; that stretch reads GYSSSMEDVSSS.

The protein belongs to the FRQ family. Progressive phosphorylation during the late circadian day and early night. Phosphorylation is also involved in regulating frq degradation. Phosphorylation by CKII may have at least three functions; it decreases the stability of frq, reduces the protein complex formation between frq and the white collar proteins, and is important for the closing of the Neurospora circadian negative feedback loop.

Its subcellular location is the nucleus. Its function is as follows. Circadian clock component involved in the generation of biological rhythms, in particular in rhythm stability, period length, and temperature compensation. Oscillates in abundance with a daily peak early in the morning. Behaves as a negative element in circadian transcriptional loop. May bind to wc-2 protein. The complex frq-wc-2 may turn off the expression of frq. This Neurospora crassa (strain ATCC 24698 / 74-OR23-1A / CBS 708.71 / DSM 1257 / FGSC 987) protein is Frequency clock protein (frq).